The chain runs to 200 residues: Imidazole glycerol phosphate synthase subunit HisH (200 aa).

Residues aspartate 3–proline 200 enclose the Glutamine amidotransferase type-1 domain. Cysteine 78 acts as the Nucleophile in catalysis. Active-site residues include histidine 179 and glutamate 181.

As to quaternary structure, heterodimer of HisH and HisF.

Its subcellular location is the cytoplasm. It carries out the reaction 5-[(5-phospho-1-deoxy-D-ribulos-1-ylimino)methylamino]-1-(5-phospho-beta-D-ribosyl)imidazole-4-carboxamide + L-glutamine = D-erythro-1-(imidazol-4-yl)glycerol 3-phosphate + 5-amino-1-(5-phospho-beta-D-ribosyl)imidazole-4-carboxamide + L-glutamate + H(+). It catalyses the reaction L-glutamine + H2O = L-glutamate + NH4(+). Its pathway is amino-acid biosynthesis; L-histidine biosynthesis; L-histidine from 5-phospho-alpha-D-ribose 1-diphosphate: step 5/9. Its function is as follows. IGPS catalyzes the conversion of PRFAR and glutamine to IGP, AICAR and glutamate. The HisH subunit catalyzes the hydrolysis of glutamine to glutamate and ammonia as part of the synthesis of IGP and AICAR. The resulting ammonia molecule is channeled to the active site of HisF. The protein is Imidazole glycerol phosphate synthase subunit HisH of Xanthomonas campestris pv. campestris (strain 8004).